Consider the following 647-residue polypeptide: Putative ankyrin repeat protein L764 (647 aa).

9 ANK repeats span residues 123 to 154 (LKDREIYLNSNCDDINLIKFIVTRNDYFQINL), 202 to 231 (LTQEHIKLAVQNRKIPVLEHLINLGIEYDL), 233 to 256 (EIINDIKDFDILKYMLEIGNSLNE), 258 to 284 (NVNIIIFNIHTTQLIEYLMNLGYTINS), 289 to 319 (SMFSHMLIVSENTDIVEFLKSINAKDSDLTV), 348 to 377 (DCNLFLKYAIISQDIPNIEYSINKGADLKK), 401 to 431 (NDVNNFILKIIENDCIETLKYLVDNNYNIDL), 529 to 558 (FILKEFPEECSSEKMDTIKFLLDFNADNNE), and 588 to 617 (NGQNIVEYLISDGDHEIFRYLYYNGFDVKN).

This chain is Putative ankyrin repeat protein L764, found in Acanthamoeba polyphaga (Amoeba).